Reading from the N-terminus, the 368-residue chain is GDP-fucose transporter 1 (368 aa).

Helical transmembrane passes span 64–84 (LSTI…LVFL), 98–118 (LFIT…MTSI), 141–161 (VLPV…CLEY), 166–186 (FYQV…YIVL), 195–215 (TMAC…EVNF), 217–237 (WLGI…SIAV), 251–271 (LSIY…LVSG), 287–307 (FWFY…SVFM), and 332–352 (AVVF…LLVI).

Belongs to the TPT transporter family. SLC35C subfamily.

It is found in the golgi apparatus membrane. It catalyses the reaction GMP(out) + GDP-beta-L-fucose(in) = GMP(in) + GDP-beta-L-fucose(out). In terms of biological role, antiporter specific for GDP-l-fucose and depending on the concomitant reverse transport of GMP. Involved in GDP-fucose import from the cytoplasm into the Golgi lumen. This is GDP-fucose transporter 1 (slc35c1) from Dictyostelium discoideum (Social amoeba).